Here is a 159-residue protein sequence, read N- to C-terminus: Transcription antitermination protein NusB (159 aa).

The protein belongs to the NusB family.

In terms of biological role, involved in transcription antitermination. Required for transcription of ribosomal RNA (rRNA) genes. Binds specifically to the boxA antiterminator sequence of the ribosomal RNA (rrn) operons. The sequence is that of Transcription antitermination protein NusB from Xanthomonas axonopodis pv. citri (strain 306).